The primary structure comprises 734 residues: Alpha-catulin (734 aa).

Phosphoserine occurs at positions 374 and 538.

Belongs to the vinculin/alpha-catenin family. In terms of assembly, interacts with ARHGEF1. Interacts with DTNA. The interaction is required for correct localization of both CTNL1 and DTNA. Widely expressed. Expressed at lower level in neural tissues and at the highest level in the adrenal gland.

The protein resides in the cytoplasm. It is found in the cytoskeleton. Its subcellular location is the cell membrane. In terms of biological role, may modulate the Rho pathway signaling by providing a scaffold for the Lbc Rho guanine nucleotide exchange factor (ARHGEF1). The polypeptide is Alpha-catulin (CTNNAL1) (Homo sapiens (Human)).